A 124-amino-acid chain; its full sequence is Fluoride-specific ion channel FluC (124 aa).

Transmembrane regions (helical) follow at residues M1–T21, W35–L55, L66–F86, and F99–L119. Na(+) is bound by residues G74 and T77.

This sequence belongs to the fluoride channel Fluc/FEX (TC 1.A.43) family.

The protein resides in the cell inner membrane. It carries out the reaction fluoride(in) = fluoride(out). Its activity is regulated as follows. Na(+) is not transported, but it plays an essential structural role and its presence is essential for fluoride channel function. Functionally, fluoride-specific ion channel. Important for reducing fluoride concentration in the cell, thus reducing its toxicity. This chain is Fluoride-specific ion channel FluC, found in Mesorhizobium japonicum (strain LMG 29417 / CECT 9101 / MAFF 303099) (Mesorhizobium loti (strain MAFF 303099)).